We begin with the raw amino-acid sequence, 88 residues long: HssA/B-like protein 61 (88 aa).

The protein belongs to the hssA/B family.

This chain is HssA/B-like protein 61 (hssl61), found in Dictyostelium discoideum (Social amoeba).